The primary structure comprises 123 residues: Keratin-associated protein 2-2 (123 aa).

The segment at Cys5–Thr112 is 11 X 5 AA repeats of C-C-[CDPQRWG]-[APRS]-[CIPSTVD].

The protein belongs to the KRTAP type 2 family. As to quaternary structure, interacts with hair keratins.

Functionally, in the hair cortex, hair keratin intermediate filaments are embedded in an interfilamentous matrix, consisting of hair keratin-associated proteins (KRTAP), which are essential for the formation of a rigid and resistant hair shaft through their extensive disulfide bond cross-linking with abundant cysteine residues of hair keratins. The matrix proteins include the high-sulfur and high-glycine-tyrosine keratins. This Homo sapiens (Human) protein is Keratin-associated protein 2-2 (KRTAP2-2).